Consider the following 176-residue polypeptide: Large ribosomal subunit protein uL6 (176 aa).

This sequence belongs to the universal ribosomal protein uL6 family. As to quaternary structure, part of the 50S ribosomal subunit.

This protein binds to the 23S rRNA, and is important in its secondary structure. It is located near the subunit interface in the base of the L7/L12 stalk, and near the tRNA binding site of the peptidyltransferase center. In Methanosarcina mazei (strain ATCC BAA-159 / DSM 3647 / Goe1 / Go1 / JCM 11833 / OCM 88) (Methanosarcina frisia), this protein is Large ribosomal subunit protein uL6.